We begin with the raw amino-acid sequence, 582 residues long: Hydrazine dehydrogenase (582 aa).

The first 32 residues, 1-32 (MRKFLKVTLASALIGCGVIGTVSSLMVKEAKA), serve as a signal peptide directing secretion. Residues Cys121, Cys124, His125, His141, Cys151, Cys154, His155, His159, Cys170, Cys175, His176, His191, Cys216, Cys219, His220, Cys227, Cys230, His231, His234, Cys247, Cys250, His251, His267, Cys297, Cys300, His301, His306, Cys342, Cys345, His346, His454, and Tyr462 each coordinate heme c. Residues 561 to 582 (GSHSAHHHESGHDPAARSMKEH) are disordered. Basic and acidic residues predominate over residues 567 to 582 (HHESGHDPAARSMKEH).

Homotrimer; subunits are linked by two covalent bonds between Tyr-462 of one subunit and heme P460 of an adjacent subunit. May form 24-mer of an octamer of trimers. Heme c serves as cofactor.

Its subcellular location is the anammoxosome. The enzyme catalyses hydrazine + 4 Fe(III)-[cytochrome c] = N2 + 4 Fe(II)-[cytochrome c] + 4 H(+). Its pathway is nitrogen metabolism. With respect to regulation, is strongly and competitively inhibited by NO and hydroxylamine. In terms of biological role, catalyzes the four-electron oxidation of hydrazine to N2. The electrons derived from hydrazine oxidation may be transferred to the quinone pool and exploited to promote the generation of proton-motive force (pmf) across the anammoxosome membrane. Is involved in anaerobic ammonium oxidation (anammox), a biological process in which nitrite is used as the electron acceptor in the conversion of ammonium to dinitrogen gas (N2) and water; this bacterial process has a major role in the Earth's nitrogen cycle and has been estimated to synthesize up to 50% of the dinitrogen gas emitted into our atmosphere from the oceans. Cannot oxidize hydroxylamine to NO. This is Hydrazine dehydrogenase from Kuenenia stuttgartiensis.